Here is a 329-residue protein sequence, read N- to C-terminus: Probable cell division protein WhiA (329 aa).

The segment at residues 275 to 308 (SLEELGALADPPLTKDAVAGRIRRLLAMADKRAQ) is a DNA-binding region (H-T-H motif).

This sequence belongs to the WhiA family.

In terms of biological role, involved in cell division and chromosome segregation. In Streptomyces griseus subsp. griseus (strain JCM 4626 / CBS 651.72 / NBRC 13350 / KCC S-0626 / ISP 5235), this protein is Probable cell division protein WhiA.